Reading from the N-terminus, the 195-residue chain is Imidazoleglycerol-phosphate dehydratase (195 aa).

Belongs to the imidazoleglycerol-phosphate dehydratase family.

The protein localises to the cytoplasm. The enzyme catalyses D-erythro-1-(imidazol-4-yl)glycerol 3-phosphate = 3-(imidazol-4-yl)-2-oxopropyl phosphate + H2O. Its pathway is amino-acid biosynthesis; L-histidine biosynthesis; L-histidine from 5-phospho-alpha-D-ribose 1-diphosphate: step 6/9. This chain is Imidazoleglycerol-phosphate dehydratase, found in Shouchella clausii (strain KSM-K16) (Alkalihalobacillus clausii).